A 66-amino-acid polypeptide reads, in one-letter code: Large ribosomal subunit protein uL29 (66 aa).

It belongs to the universal ribosomal protein uL29 family.

The protein is Large ribosomal subunit protein uL29 of Rhizobium meliloti (strain 1021) (Ensifer meliloti).